The chain runs to 235 residues: Purine nucleoside phosphorylase DeoD-type (235 aa).

Histidine 4 contacts a purine D-ribonucleoside. Residues glycine 20, arginine 24, arginine 43, and 87–90 (RVGT) contribute to the phosphate site. Residues 180-182 (EME) and 204-205 (SD) each bind a purine D-ribonucleoside. Aspartate 205 acts as the Proton donor in catalysis.

It belongs to the PNP/UDP phosphorylase family. Homohexamer; trimer of homodimers.

It catalyses the reaction a purine D-ribonucleoside + phosphate = a purine nucleobase + alpha-D-ribose 1-phosphate. It carries out the reaction a purine 2'-deoxy-D-ribonucleoside + phosphate = a purine nucleobase + 2-deoxy-alpha-D-ribose 1-phosphate. Functionally, catalyzes the reversible phosphorolytic breakdown of the N-glycosidic bond in the beta-(deoxy)ribonucleoside molecules, with the formation of the corresponding free purine bases and pentose-1-phosphate. This is Purine nucleoside phosphorylase DeoD-type from Oceanobacillus iheyensis (strain DSM 14371 / CIP 107618 / JCM 11309 / KCTC 3954 / HTE831).